The sequence spans 510 residues: Bifunctional pantoate ligase/cytidylate kinase (510 aa).

The interval 1–276 (MKKVIIRKTE…CGETRLIDHV (276 aa)) is pantoate--beta-alanine ligase. 29–36 (MGNLHNGH) is an ATP binding site. Catalysis depends on His36, which acts as the Proton donor. Position 61 (Gln61) interacts with (R)-pantoate. A beta-alanine-binding site is contributed by Gln61. 150-153 (GEKD) contacts ATP. Position 156 (Gln156) interacts with (R)-pantoate. ATP is bound at residue 187-190 (LSSR). The interval 277–510 (FLMKRSPIIA…DKIPKETQIR (234 aa)) is cytidylate kinase.

This sequence in the N-terminal section; belongs to the pantothenate synthetase family. The protein in the C-terminal section; belongs to the cytidylate kinase family. Type 1 subfamily.

It localises to the cytoplasm. The catalysed reaction is (R)-pantoate + beta-alanine + ATP = (R)-pantothenate + AMP + diphosphate + H(+). It catalyses the reaction CMP + ATP = CDP + ADP. It carries out the reaction dCMP + ATP = dCDP + ADP. The protein operates within cofactor biosynthesis; (R)-pantothenate biosynthesis; (R)-pantothenate from (R)-pantoate and beta-alanine: step 1/1. Catalyzes the condensation of pantoate with beta-alanine in an ATP-dependent reaction via a pantoyl-adenylate intermediate. Its function is as follows. Catalyzes the transfer of a phosphate group from ATP to either CMP or dCMP to form CDP or dCDP and ADP, respectively. The protein is Bifunctional pantoate ligase/cytidylate kinase of Prochlorococcus marinus (strain MIT 9312).